The following is a 284-amino-acid chain: D-tagatose-1,6-bisphosphate aldolase subunit GatY (284 aa).

D82 (proton donor) is an active-site residue. H83 and H180 together coordinate Zn(2+). G181 lines the dihydroxyacetone phosphate pocket. Zn(2+) is bound at residue H208. Dihydroxyacetone phosphate-binding positions include 209–211 and 230–233; these read GAS and NVAT.

It belongs to the class II fructose-bisphosphate aldolase family. TagBP aldolase GatY subfamily. As to quaternary structure, forms a complex with GatZ. Zn(2+) is required as a cofactor.

The enzyme catalyses D-tagatofuranose 1,6-bisphosphate = D-glyceraldehyde 3-phosphate + dihydroxyacetone phosphate. It functions in the pathway carbohydrate metabolism; D-tagatose 6-phosphate degradation; D-glyceraldehyde 3-phosphate and glycerone phosphate from D-tagatose 6-phosphate: step 2/2. In terms of biological role, catalytic subunit of the tagatose-1,6-bisphosphate aldolase GatYZ, which catalyzes the reversible aldol condensation of dihydroxyacetone phosphate (DHAP or glycerone-phosphate) with glyceraldehyde 3-phosphate (G3P) to produce tagatose 1,6-bisphosphate (TBP). Requires GatZ subunit for full activity and stability. Is involved in the catabolism of galactitol. The chain is D-tagatose-1,6-bisphosphate aldolase subunit GatY from Shigella boydii serotype 4 (strain Sb227).